The sequence spans 443 residues: Methionine aminopeptidase 2-1 (443 aa).

Residues 1 to 90 form a disordered region; the sequence is MAAQADDELN…RVPVSELFPN (90 aa). Residues 33 to 48 show a composition bias toward acidic residues; sequence ADNDDSEDDEKEEEGG. Basic residues predominate over residues 58 to 73; sequence KKKKKRKPKKKKKGGA. Histidine 196 is a substrate binding site. Aspartate 216, aspartate 227, and histidine 296 together coordinate a divalent metal cation. Histidine 304 serves as a coordination point for substrate. A divalent metal cation-binding residues include glutamate 329 and glutamate 424.

It belongs to the peptidase M24A family. Methionine aminopeptidase eukaryotic type 2 subfamily. The cofactor is Co(2+). Zn(2+) serves as cofactor. Mn(2+) is required as a cofactor. It depends on Fe(2+) as a cofactor.

It is found in the cytoplasm. It carries out the reaction Release of N-terminal amino acids, preferentially methionine, from peptides and arylamides.. Cotranslationally removes the N-terminal methionine from nascent proteins. The N-terminal methionine is often cleaved when the second residue in the primary sequence is small and uncharged (Met-Ala-, Cys, Gly, Pro, Ser, Thr, or Val). The sequence is that of Methionine aminopeptidase 2-1 from Talaromyces stipitatus (strain ATCC 10500 / CBS 375.48 / QM 6759 / NRRL 1006) (Penicillium stipitatum).